Here is a 503-residue protein sequence, read N- to C-terminus: Maturase K (503 aa).

It belongs to the intron maturase 2 family. MatK subfamily.

It localises to the plastid. The protein localises to the chloroplast. In terms of biological role, usually encoded in the trnK tRNA gene intron. Probably assists in splicing its own and other chloroplast group II introns. This is Maturase K from Rosa gigantea (Giant tea rose).